The primary structure comprises 123 residues: uncharacterized protein (123 aa).

A Rhodanese domain is found at 17-117 (SNDNAFLVDV…NNQDKGWKQN (101 aa)).

This is an uncharacterized protein from Rickettsia conorii (strain ATCC VR-613 / Malish 7).